Here is a 203-residue protein sequence, read N- to C-terminus: uncharacterized protein (203 aa).

The helical transmembrane segment at 171–191 (VGYLSIWLKEYWYLVVLFVLI) threads the bilayer.

The protein resides in the membrane. This is an uncharacterized protein from Methanocaldococcus jannaschii (strain ATCC 43067 / DSM 2661 / JAL-1 / JCM 10045 / NBRC 100440) (Methanococcus jannaschii).